Here is a 270-residue protein sequence, read N- to C-terminus: MNRYQKLCKKLIPFKKGCFIPFVVLGDPSIDMSLKIINALIENGADGLELGIPFSDPIADGEIIQKANLRAFNSKINLHKCFDILSEIREKHQTIPIGLLLYSNLIFKFGINKFYLKCYKIGIDSILIADLPIEESYVFRKYAVINNILPVFICPPDAKKNVIKNIAIHSQGYIYLLSRSGVTGINQEIMIPPLSLINKLKKLTKTPLIQGFGVSYPYQIQKIILSGISGVICGSIIAKLIENYFQDDDKLIKEIIFLSKSFKKATIIIE.

Residues Glu-49 and Asp-60 each act as proton acceptor in the active site.

It belongs to the TrpA family. As to quaternary structure, tetramer of two alpha and two beta chains.

The catalysed reaction is (1S,2R)-1-C-(indol-3-yl)glycerol 3-phosphate + L-serine = D-glyceraldehyde 3-phosphate + L-tryptophan + H2O. It functions in the pathway amino-acid biosynthesis; L-tryptophan biosynthesis; L-tryptophan from chorismate: step 5/5. The alpha subunit is responsible for the aldol cleavage of indoleglycerol phosphate to indole and glyceraldehyde 3-phosphate. This Buchnera aphidicola subsp. Melaphis rhois protein is Tryptophan synthase alpha chain.